The chain runs to 562 residues: Phosphoacetylglucosamine mutase (562 aa).

Ser74 serves as the catalytic Phosphoserine intermediate. Mg(2+) is bound by residues Ser74, Asp291, Asp293, and Asp295. Substrate contacts are provided by residues 395 to 397, 526 to 530, and Arg535; these read EAN and RPSGT.

The protein belongs to the phosphohexose mutase family. Requires Mg(2+) as cofactor.

The catalysed reaction is N-acetyl-alpha-D-glucosamine 1-phosphate = N-acetyl-D-glucosamine 6-phosphate. It functions in the pathway nucleotide-sugar biosynthesis; UDP-N-acetyl-alpha-D-glucosamine biosynthesis; N-acetyl-alpha-D-glucosamine 1-phosphate from alpha-D-glucosamine 6-phosphate (route I): step 2/2. In terms of biological role, interconverts GlcNAc-6-P and GlcNAc-1-P. This is Phosphoacetylglucosamine mutase from Oryza sativa subsp. japonica (Rice).